Here is a 154-residue protein sequence, read N- to C-terminus: Egg-lysin (154 aa).

Residues 1-18 (MKLLVLCIFAMMATLAMS) form the signal peptide.

As to quaternary structure, monomer. Homodimer. Molecules associate into dimers and then rapidly dissociate again. Interacts (as a monomer) with the egg vitelline layer protein VERL (via VERL repeats); each VERL chain can bind multiple copies of lysin. In terms of tissue distribution, sperm (at protein level).

Its subcellular location is the cytoplasmic vesicle. The protein localises to the secretory vesicle. The protein resides in the acrosome lumen. Its function is as follows. Creates a 3 um hole in the egg vitelline layer through which the sperm passes. Does not have enzyme activity. Species-specific interaction between the sperm protein lysin and the egg protein VERL exposes a basic surface on lysin that may dissociate the egg vitelline layer via electrostatic repulsion. Plays a role in ensuring species-specific fertilization. The protein is Egg-lysin of Haliotis rufescens (California red abalone).